The sequence spans 688 residues: G-protein coupled receptor-associated protein LMBRD2 (688 aa).

The Extracellular segment spans residues 1–3 (MSG). A helical transmembrane segment spans residues 4-21 (AALGLEIVFVFFLALFLL). The Cytoplasmic portion of the chain corresponds to 22 to 32 (HRYGDFKKQHR). The chain crosses the membrane as a helical span at residues 33-53 (LVIIATLLAWYLCFLIVFILP). At 54–99 (LDVSTTIYNRCKLAVNSSPAESNSSFVTLAPSKQQCFKPWSYIPNG) the chain is on the extracellular side. N-linked (GlcNAc...) asparagine glycosylation occurs at asparagine 76. The chain crosses the membrane as a helical span at residues 100–120 (IMPIFWRVVYWTSQFLTWILL). Topologically, residues 121 to 144 (PFMQSYARSGGFSITGKIKTALIE) are cytoplasmic. The helical transmembrane segment at 145–165 (NAIYYGTYLLIFGAFLIYVAV) threads the bilayer. The Extracellular portion of the chain corresponds to 166 to 180 (NPKFNLQWNQLQTIG). Residues 181 to 201 (IAAANTWGLFLLVLLLGYGLV) traverse the membrane as a helical segment. The Cytoplasmic segment spans residues 202–381 (EIPRSHWNGA…ECLLRPWFYR (180 aa)). Residues 222–254 (FKAAKLMTEKADAEENLEDIMEEVRKVSESIKY) adopt a coiled-coil conformation. Residues 382 to 402 (VLAVVLAAFSVIVVWSECTFF) form a helical membrane-spanning segment. The Extracellular segment spans residues 403-426 (STRPVLSLVAVFIQLAEKTYNYIY). The chain crosses the membrane as a helical span at residues 427–447 (IEMACFLTIFFLSICVYSTVF). Topologically, residues 448 to 467 (RIRVFNYYYLASHHQTDAYS) are cytoplasmic. A helical membrane pass occupies residues 468 to 488 (LLFSGMLFCRLTPPLCLNFLG). Residues 489-515 (LTHMDATISHTDAQPTAYTSIMGSMKV) lie on the Extracellular side of the membrane. Residues 516–536 (LSFIADGFYIYYPMLVVILCI) form a helical membrane-spanning segment. Topologically, residues 537-688 (ATYFSLGTRC…MSRSRIFEDV (152 aa)) are cytoplasmic. Residues 600–617 (REDSTRNRVVHTEQKESS) are compositionally biased toward basic and acidic residues. Residues 600 to 673 (REDSTRNRVV…ESDSGRYQPG (74 aa)) are disordered. A compositionally biased stretch (polar residues) spans 618–634 (FSETNTNRPLSKYTRTN). A compositionally biased stretch (basic and acidic residues) spans 635-644 (GRTERDRIEL).

Belongs to the LIMR family.

The protein resides in the cell membrane. Its function is as follows. May associate with G-protein coupled receptors and regulate downstream signaling pathways. The chain is G-protein coupled receptor-associated protein LMBRD2 from Gallus gallus (Chicken).